The primary structure comprises 235 residues: uncharacterized protein (235 aa).

One can recognise an S4 RNA-binding domain in the interval 2 to 69 (CRLAKIISNA…KPRLWIYYKP (68 aa)). The active-site Nucleophile is D102.

This sequence belongs to the pseudouridine synthase RsuA family.

The enzyme catalyses a uridine in RNA = a pseudouridine in RNA. This is an uncharacterized protein from Rickettsia prowazekii (strain Madrid E).